The primary structure comprises 475 residues: L-seryl-tRNA(Sec) selenium transferase (475 aa).

Lysine 295 bears the N6-(pyridoxal phosphate)lysine mark.

The protein belongs to the SelA family. It depends on pyridoxal 5'-phosphate as a cofactor.

The protein localises to the cytoplasm. It carries out the reaction L-seryl-tRNA(Sec) + selenophosphate + H(+) = L-selenocysteinyl-tRNA(Sec) + phosphate. It functions in the pathway aminoacyl-tRNA biosynthesis; selenocysteinyl-tRNA(Sec) biosynthesis; selenocysteinyl-tRNA(Sec) from L-seryl-tRNA(Sec) (bacterial route): step 1/1. Functionally, converts seryl-tRNA(Sec) to selenocysteinyl-tRNA(Sec) required for selenoprotein biosynthesis. The polypeptide is L-seryl-tRNA(Sec) selenium transferase (Desulfovibrio desulfuricans (strain ATCC 27774 / DSM 6949 / MB)).